The sequence spans 285 residues: 2-dehydro-3-deoxyphosphooctonate aldolase (285 aa).

Belongs to the KdsA family.

It is found in the cytoplasm. The catalysed reaction is D-arabinose 5-phosphate + phosphoenolpyruvate + H2O = 3-deoxy-alpha-D-manno-2-octulosonate-8-phosphate + phosphate. It participates in carbohydrate biosynthesis; 3-deoxy-D-manno-octulosonate biosynthesis; 3-deoxy-D-manno-octulosonate from D-ribulose 5-phosphate: step 2/3. The protein operates within bacterial outer membrane biogenesis; lipopolysaccharide biosynthesis. This Albidiferax ferrireducens (strain ATCC BAA-621 / DSM 15236 / T118) (Rhodoferax ferrireducens) protein is 2-dehydro-3-deoxyphosphooctonate aldolase.